The following is a 365-amino-acid chain: Glycolaldehyde reductase (365 aa).

8 residues coordinate NAD(+): aspartate 37, glycine 94, lysine 95, threonine 116, serine 119, serine 125, leucine 127, and tyrosine 131. Zn(2+) is bound by residues aspartate 171, histidine 254, and histidine 271.

This sequence belongs to the iron-containing alcohol dehydrogenase family. Zn(2+) serves as cofactor.

It carries out the reaction ethylene glycol + NAD(+) = glycolaldehyde + NADH + H(+). Its activity is regulated as follows. Is subject to substrate inhibition. In terms of biological role, oxidoreductase involved in the non-carboxylating pentose bisphosphate pathway, a nucleoside degradation pathway present in some halophilic archaea. Catalyzes the reduction of glycolaldehyde to ethylene glycol. Cannot catalyze the oxidation of glycerol 1-phosphate nor the reduction of dihydroxyacetone phosphate (DHAP). This is Glycolaldehyde reductase from Halobacterium salinarum (strain ATCC 700922 / JCM 11081 / NRC-1) (Halobacterium halobium).